The sequence spans 255 residues: Type III pantothenate kinase (255 aa).

6–13 contributes to the ATP binding site; it reads DVGNTNTV. Substrate is bound by residues Tyr-100 and 107–110; that span reads GADR. Asp-109 (proton acceptor) is an active-site residue. A K(+)-binding site is contributed by Asp-129. Thr-132 contacts ATP. Thr-184 lines the substrate pocket.

This sequence belongs to the type III pantothenate kinase family. As to quaternary structure, homodimer. The cofactor is NH4(+). Requires K(+) as cofactor.

Its subcellular location is the cytoplasm. It carries out the reaction (R)-pantothenate + ATP = (R)-4'-phosphopantothenate + ADP + H(+). The protein operates within cofactor biosynthesis; coenzyme A biosynthesis; CoA from (R)-pantothenate: step 1/5. Its function is as follows. Catalyzes the phosphorylation of pantothenate (Pan), the first step in CoA biosynthesis. The polypeptide is Type III pantothenate kinase (Syntrophotalea carbinolica (strain DSM 2380 / NBRC 103641 / GraBd1) (Pelobacter carbinolicus)).